The primary structure comprises 241 residues: Zinc finger CCHC domain-containing protein 17 (241 aa).

Residues 16 to 88 (YTIFQGEVAM…DRIKVSLSMK (73 aa)) form the S1 motif domain. Position 114 is a phosphoserine (Ser114). Residues 131–148 (TTCKKCGCKGHFAKDCFM) form a CCHC-type zinc finger. Position 144 is an N6-acetyllysine (Lys144). The interval 160–241 (EEEEEKEEAK…KKKHKKKHKE (82 aa)) is disordered. A compositionally biased stretch (basic and acidic residues) spans 166-178 (EEAKAEGLEKPDP). Positions 182–198 (SSRKRKKEKKKKKHRDR) are enriched in basic residues. Ser183 bears the Phosphoserine mark. Positions 211 to 225 (DTGKKARHSSKDSKA) are enriched in basic and acidic residues. A compositionally biased stretch (basic residues) spans 226 to 241 (TKKKKKKKKHKKKHKE).

Interacts with PNN. Associates with the 60S ribosomal subunit. In terms of tissue distribution, expressed in liver, brain, heart, kidney testis, stomach, small intestine, skin, thymus, uterus, placenta, spleen, lung and skeletal muscle.

Its subcellular location is the nucleus. It is found in the nucleolus. This Mus musculus (Mouse) protein is Zinc finger CCHC domain-containing protein 17 (Zcchc17).